We begin with the raw amino-acid sequence, 61 residues long: Small ribosomal subunit protein uS14 (61 aa).

Zn(2+) is bound by residues Cys-24, Cys-27, Cys-40, and Cys-43.

It belongs to the universal ribosomal protein uS14 family. Zinc-binding uS14 subfamily. Part of the 30S ribosomal subunit. Contacts proteins S3 and S10. Zn(2+) serves as cofactor.

Functionally, binds 16S rRNA, required for the assembly of 30S particles and may also be responsible for determining the conformation of the 16S rRNA at the A site. The protein is Small ribosomal subunit protein uS14 of Desulfosudis oleivorans (strain DSM 6200 / JCM 39069 / Hxd3) (Desulfococcus oleovorans).